Here is a 311-residue protein sequence, read N- to C-terminus: MALPIIIDCDPGHDDAIALVLALASPELEVKAITSSAGNQTPEKTLRNVLRMLTLLKRPDIPVAGGAVKPLMRELIIADNVHGESGLDGPALPEPSFAPQSGTAVELMAKTLRESSQPVTIVSTGPQTNVALLLNSHPELHAKIARIVIMGGAMGLGNWTPAAEFNIYVDPEAAEIVFQSGIPVVMAGLNVTHKAQIHAADIERFRAIGNPISTIVAELLDFFMEYHKDEKWGFVGAPLHDPCTIAWLLKPEIFTTVERWVGVETQGKYTQGMTVVDYYFLTGNKPNATVMVDVDRQGFVDLLAERLQYYA.

The active site involves His240.

This sequence belongs to the IUNH family. RihA subfamily.

Hydrolyzes cytidine or uridine to ribose and cytosine or uracil, respectively. The polypeptide is Pyrimidine-specific ribonucleoside hydrolase RihA (Salmonella paratyphi A (strain ATCC 9150 / SARB42)).